The chain runs to 237 residues: Ribonuclease PH (237 aa).

Phosphate-binding positions include Arg86 and 124-126 (GTR).

It belongs to the RNase PH family. As to quaternary structure, homohexameric ring arranged as a trimer of dimers.

The enzyme catalyses tRNA(n+1) + phosphate = tRNA(n) + a ribonucleoside 5'-diphosphate. Phosphorolytic 3'-5' exoribonuclease that plays an important role in tRNA 3'-end maturation. Removes nucleotide residues following the 3'-CCA terminus of tRNAs; can also add nucleotides to the ends of RNA molecules by using nucleoside diphosphates as substrates, but this may not be physiologically important. Probably plays a role in initiation of 16S rRNA degradation (leading to ribosome degradation) during starvation. This is Ribonuclease PH from Bradyrhizobium sp. (strain ORS 278).